Here is a 126-residue protein sequence, read N- to C-terminus: Small ribosomal subunit protein bS6 (126 aa).

The interval 103-126 (LKAKDERKAPEALVEEVEAEDADE) is disordered. A compositionally biased stretch (acidic residues) spans 115–126 (LVEEVEAEDADE).

Belongs to the bacterial ribosomal protein bS6 family.

In terms of biological role, binds together with bS18 to 16S ribosomal RNA. The chain is Small ribosomal subunit protein bS6 from Glaesserella parasuis serovar 5 (strain SH0165) (Haemophilus parasuis).